Reading from the N-terminus, the 492-residue chain is Probable malate:quinone oxidoreductase (492 aa).

It belongs to the MQO family. The cofactor is FAD.

It catalyses the reaction (S)-malate + a quinone = a quinol + oxaloacetate. Its pathway is carbohydrate metabolism; tricarboxylic acid cycle; oxaloacetate from (S)-malate (quinone route): step 1/1. This Methylobacillus flagellatus (strain ATCC 51484 / DSM 6875 / VKM B-1610 / KT) protein is Probable malate:quinone oxidoreductase.